The following is a 706-amino-acid chain: Elongation factor G (706 aa).

A tr-type G domain is found at 8–297 (ERVRNIGIAA…AVIDYLPAPT (290 aa)). Residues 17–24 (AHIDAGKT), 96–100 (DTPGH), and 150–153 (NKMD) contribute to the GTP site.

The protein belongs to the TRAFAC class translation factor GTPase superfamily. Classic translation factor GTPase family. EF-G/EF-2 subfamily.

The protein localises to the cytoplasm. In terms of biological role, catalyzes the GTP-dependent ribosomal translocation step during translation elongation. During this step, the ribosome changes from the pre-translocational (PRE) to the post-translocational (POST) state as the newly formed A-site-bound peptidyl-tRNA and P-site-bound deacylated tRNA move to the P and E sites, respectively. Catalyzes the coordinated movement of the two tRNA molecules, the mRNA and conformational changes in the ribosome. This Cyanothece sp. (strain PCC 7425 / ATCC 29141) protein is Elongation factor G.